Consider the following 585-residue polypeptide: Protein DENND6B (585 aa).

Positions 43-214 constitute a uDENN domain; it reads ECVCVVTFDL…LPVMGVVVQV (172 aa). The 128-residue stretch at 246–373 folds into the cDENN domain; the sequence is VHELDLFRCF…VKLKKPSRLK (128 aa). Positions 375-499 constitute a dDENN domain; it reads LDTKPGLYTA…KSPHFDGWYR (125 aa).

The protein belongs to the DENND6 family.

The protein localises to the recycling endosome. It is found in the cytoplasm. Functionally, guanine nucleotide exchange factor (GEF) for RAB14. Also has some, lesser GEF activity towards RAB35. This Homo sapiens (Human) protein is Protein DENND6B (DENND6B).